A 152-amino-acid polypeptide reads, in one-letter code: SsrA-binding protein (152 aa).

It belongs to the SmpB family.

It is found in the cytoplasm. Its function is as follows. Required for rescue of stalled ribosomes mediated by trans-translation. Binds to transfer-messenger RNA (tmRNA), required for stable association of tmRNA with ribosomes. tmRNA and SmpB together mimic tRNA shape, replacing the anticodon stem-loop with SmpB. tmRNA is encoded by the ssrA gene; the 2 termini fold to resemble tRNA(Ala) and it encodes a 'tag peptide', a short internal open reading frame. During trans-translation Ala-aminoacylated tmRNA acts like a tRNA, entering the A-site of stalled ribosomes, displacing the stalled mRNA. The ribosome then switches to translate the ORF on the tmRNA; the nascent peptide is terminated with the 'tag peptide' encoded by the tmRNA and targeted for degradation. The ribosome is freed to recommence translation, which seems to be the essential function of trans-translation. In Rickettsia canadensis (strain McKiel), this protein is SsrA-binding protein.